Here is a 391-residue protein sequence, read N- to C-terminus: Ferrochelatase (391 aa).

Fe cation-binding residues include His196 and Glu281.

It belongs to the ferrochelatase family.

It localises to the cytoplasm. The enzyme catalyses heme b + 2 H(+) = protoporphyrin IX + Fe(2+). The protein operates within porphyrin-containing compound metabolism; protoheme biosynthesis; protoheme from protoporphyrin-IX: step 1/1. Its function is as follows. Catalyzes the ferrous insertion into protoporphyrin IX. The chain is Ferrochelatase from Parasynechococcus marenigrum (strain WH8102).